We begin with the raw amino-acid sequence, 64 residues long: Large ribosomal subunit protein uL30 (64 aa).

It belongs to the universal ribosomal protein uL30 family. Part of the 50S ribosomal subunit.

The sequence is that of Large ribosomal subunit protein uL30 from Desulforudis audaxviator (strain MP104C).